The chain runs to 541 residues: MESQRNLLLIGLLFVSFLLWQQWESDKAPKPATEVTAAAQIHDQAINSDVPTADAGVPATVAATQNLILVTTDQLEIQINPVGGDIVHAALLTHKLEQNEEAPFVLLEQKNNFSYIAQSGLIGRDGIDSAASGRAKFAAAADAYTLADGQDTLEVPLTLTTDAGVTFTKVFVFKRGQFDVGVDYRVANNSAAPVQVQMYGQIKQTITASESSMMMPTYRGAAFSTADVRYEKYSFDDMGKKDLEEPTLGGWVAMLQHYFVSAWVPAAADKNTLFTSVSAGGLANIGFKGSVHDVAPGATETISATFYVGPKDQAALSALSDTLNLVVDYGFLWWLAVPIHWILMFFQSLVHNWGVAIILVTLTVRGLLYPLTKAQYVSMAKMRNLQPKLQDLKDRFGDDRQKMGQAMMELYKKEKVNPMGGCLPILLQMPIFIALYWVLLESVELRHAPFMLWIQDLSVQDPYYVLPLLMGASMWAMQKMQPMAPNMDPMQQKMLQWMPMIFTVFFLWFPAGLVLYWLVGNLVAITQQKIIYASLEKKGLK.

6 helical membrane-spanning segments follow: residues 6 to 26 (NLLLIGLLFVSFLLWQQWESD), 326 to 346 (VVDYGFLWWLAVPIHWILMFF), 349 to 369 (LVHNWGVAIILVTLTVRGLLY), 420 to 440 (GGCLPILLQMPIFIALYWVLL), 457 to 477 (LSVQDPYYVLPLLMGASMWAM), and 500 to 520 (MIFTVFFLWFPAGLVLYWLVG).

It belongs to the OXA1/ALB3/YidC family. Type 1 subfamily. Interacts with the Sec translocase complex via SecD. Specifically interacts with transmembrane segments of nascent integral membrane proteins during membrane integration.

The protein resides in the cell inner membrane. Its function is as follows. Required for the insertion and/or proper folding and/or complex formation of integral membrane proteins into the membrane. Involved in integration of membrane proteins that insert both dependently and independently of the Sec translocase complex, as well as at least some lipoproteins. Aids folding of multispanning membrane proteins. This Shewanella amazonensis (strain ATCC BAA-1098 / SB2B) protein is Membrane protein insertase YidC.